The primary structure comprises 180 residues: Large ribosomal subunit protein uL5 (180 aa).

This sequence belongs to the universal ribosomal protein uL5 family. As to quaternary structure, part of the 50S ribosomal subunit; part of the 5S rRNA/L5/L18/L25 subcomplex. Contacts the 5S rRNA and the P site tRNA. Forms a bridge to the 30S subunit in the 70S ribosome.

This is one of the proteins that bind and probably mediate the attachment of the 5S RNA into the large ribosomal subunit, where it forms part of the central protuberance. In the 70S ribosome it contacts protein S13 of the 30S subunit (bridge B1b), connecting the 2 subunits; this bridge is implicated in subunit movement. Contacts the P site tRNA; the 5S rRNA and some of its associated proteins might help stabilize positioning of ribosome-bound tRNAs. The chain is Large ribosomal subunit protein uL5 from Streptococcus sanguinis (strain SK36).